The sequence spans 312 residues: Protein dif-1 (312 aa).

Solcar repeat units lie at residues 2–93, 102–193, and 203–289; these read SDVL…GKWL, MTFI…LKKK, and LSPG…TLAA. The next 6 helical transmembrane spans lie at 5-25, 69-89, 104-124, 172-192, 209-229, and 261-282; these read LLNFIAGGVGGSCTVIVGHPF, MAAPLVGVSPLFAVFFGGCAV, FIQNANAGALAGVFTTIVMVP, TLLRDIPASAAYLSVYEYLKK, LMAGGLAGIANWGVCIPADVL, and LFKGFWPVMLRAFPANAACFFG.

This sequence belongs to the mitochondrial carrier (TC 2.A.29) family.

Its subcellular location is the mitochondrion inner membrane. Functionally, seems to play a role in the maintenance of tissue differentiation in the developing embryo, but not for its initiation. The polypeptide is Protein dif-1 (dif-1) (Caenorhabditis elegans).